The primary structure comprises 149 residues: Lipoprotein MlpF (149 aa).

The signal sequence occupies residues Met-1–Ser-17. Residue Cys-18 is the site of N-palmitoyl cysteine attachment. The S-diacylglycerol cysteine moiety is linked to residue Cys-18. The disordered stretch occupies residues Leu-26–Leu-58. A compositionally biased stretch (basic and acidic residues) spans Lys-38 to Leu-58.

The protein belongs to the Multicopy lipoprotein (Mlp) family.

It localises to the cell outer membrane. In terms of biological role, an outer membrane protein that may participate in pathogenesis. Some human Lyme disease patients have antibodies against this protein. The Mlp proteins probably undergo intragenic recombination, generating new alleles. The protein is Lipoprotein MlpF of Borreliella burgdorferi (strain ATCC 35210 / DSM 4680 / CIP 102532 / B31) (Borrelia burgdorferi).